A 310-amino-acid polypeptide reads, in one-letter code: Transcription initiation factor IIB (310 aa).

Tandem repeats lie at residues 126–209 (REIT…VREL) and 220–301 (RYVS…ELVQ).

It belongs to the TFIIB family.

Functionally, stabilizes TBP binding to an archaeal box-A promoter. Also responsible for recruiting RNA polymerase II to the pre-initiation complex (DNA-TBP-TFIIB). The polypeptide is Transcription initiation factor IIB (Pyrodictium occultum).